The primary structure comprises 738 residues: Phosphoribosylformylglycinamidine synthase subunit PurL (738 aa).

The active site involves H53. 2 residues coordinate ATP: Y56 and K95. Mg(2+) is bound at residue E97. Substrate contacts are provided by residues S98–H101 and R120. Residue H99 is the Proton acceptor of the active site. Residue D121 coordinates Mg(2+). Residue Q244 participates in substrate binding. Residue D274 participates in Mg(2+) binding. A substrate-binding site is contributed by E318–Q320. Residues D499 and G536 each coordinate ATP. N537 is a Mg(2+) binding site. S539 provides a ligand contact to substrate.

The protein belongs to the FGAMS family. Monomer. Part of the FGAM synthase complex composed of 1 PurL, 1 PurQ and 2 PurS subunits.

It is found in the cytoplasm. It catalyses the reaction N(2)-formyl-N(1)-(5-phospho-beta-D-ribosyl)glycinamide + L-glutamine + ATP + H2O = 2-formamido-N(1)-(5-O-phospho-beta-D-ribosyl)acetamidine + L-glutamate + ADP + phosphate + H(+). The protein operates within purine metabolism; IMP biosynthesis via de novo pathway; 5-amino-1-(5-phospho-D-ribosyl)imidazole from N(2)-formyl-N(1)-(5-phospho-D-ribosyl)glycinamide: step 1/2. Functionally, part of the phosphoribosylformylglycinamidine synthase complex involved in the purines biosynthetic pathway. Catalyzes the ATP-dependent conversion of formylglycinamide ribonucleotide (FGAR) and glutamine to yield formylglycinamidine ribonucleotide (FGAM) and glutamate. The FGAM synthase complex is composed of three subunits. PurQ produces an ammonia molecule by converting glutamine to glutamate. PurL transfers the ammonia molecule to FGAR to form FGAM in an ATP-dependent manner. PurS interacts with PurQ and PurL and is thought to assist in the transfer of the ammonia molecule from PurQ to PurL. This Leuconostoc mesenteroides subsp. mesenteroides (strain ATCC 8293 / DSM 20343 / BCRC 11652 / CCM 1803 / JCM 6124 / NCDO 523 / NBRC 100496 / NCIMB 8023 / NCTC 12954 / NRRL B-1118 / 37Y) protein is Phosphoribosylformylglycinamidine synthase subunit PurL.